We begin with the raw amino-acid sequence, 444 residues long: Tubulin beta chain (444 aa).

The GTP site is built by glutamine 11, glutamate 69, serine 138, glycine 142, threonine 143, glycine 144, asparagine 204, and asparagine 226. Glutamate 69 contacts Mg(2+).

This sequence belongs to the tubulin family. In terms of assembly, dimer of alpha and beta chains. A typical microtubule is a hollow water-filled tube with an outer diameter of 25 nm and an inner diameter of 15 nM. Alpha-beta heterodimers associate head-to-tail to form protofilaments running lengthwise along the microtubule wall with the beta-tubulin subunit facing the microtubule plus end conferring a structural polarity. Microtubules usually have 13 protofilaments but different protofilament numbers can be found in some organisms and specialized cells. The cofactor is Mg(2+).

It localises to the cytoplasm. Its subcellular location is the cytoskeleton. Its function is as follows. Tubulin is the major constituent of microtubules, a cylinder consisting of laterally associated linear protofilaments composed of alpha- and beta-tubulin heterodimers. Microtubules grow by the addition of GTP-tubulin dimers to the microtubule end, where a stabilizing cap forms. Below the cap, tubulin dimers are in GDP-bound state, owing to GTPase activity of alpha-tubulin. This is Tubulin beta chain from Phytophthora cinnamomi (Cinnamon fungus).